A 245-amino-acid polypeptide reads, in one-letter code: Small ribosomal subunit protein uS2 (245 aa).

The protein belongs to the universal ribosomal protein uS2 family.

This Pseudomonas fluorescens (strain SBW25) protein is Small ribosomal subunit protein uS2.